The sequence spans 281 residues: Proline iminopeptidase PfmaB (281 aa).

The AB hydrolase-1 domain maps to 23-267; it reads PLVITLHGGR…NANHSVHVEK (245 aa).

It belongs to the peptidase S33 family.

The enzyme catalyses Release of N-terminal proline from a peptide.. Its function is as follows. Proline iminopeptidase; part of the gene cluster that mediates the biosynthesis of dihydroxynaphthalene (DHN)-melanin, a bluish-green pigment forming a dark layer in the conidial wall that protects the conidia from UV radiations. The first step of the pathway is the production of the pentaketide 1,3,6,8-tetrahydroxynaphthalene (1,3,6,8-THN or T4HN) by the polyketide synthase PfmaE though condensation of acetyl-CoA with malonyl-CoA. T4HN is not stable and easily oxidizes into the stable form flaviolin. T4HN is also substrate of the hydroxynaphthalene reductase PfmaG to yield scytalone. The scytalone dehydratase PfmaJ then reduces scytalone to 1,3,8-THN. 1,3,8-THN is then substrate of the hydroxynaphthalene reductase PfmaI to yield vermelone. Vermelone is further converted by the multicopper oxidase PfmaD to 1,8-DHN. Finally the laccase PFICI_06862 transforms 1,8-DHN to DHN-melanin. The roles of the 5-oxoprolinase PfmaA and the proline iminopeptidase PfmaB within the cluster have not been elucidated yet. The sequence is that of Proline iminopeptidase PfmaB from Pestalotiopsis fici (strain W106-1 / CGMCC3.15140).